The primary structure comprises 131 residues: Translation initiation factor 5A (131 aa).

Lysine 36 is subject to Hypusine.

Belongs to the eIF-5A family.

It localises to the cytoplasm. Functions by promoting the formation of the first peptide bond. The chain is Translation initiation factor 5A (eIF5A) from Metallosphaera sedula (strain ATCC 51363 / DSM 5348 / JCM 9185 / NBRC 15509 / TH2).